The chain runs to 543 residues: Vibriobactin-specific 2,3-dihydroxybenzoate-AMP ligase (543 aa).

A helical transmembrane segment spans residues 240 to 259 (FPLSSPGALGVFWAGGCVVL).

It belongs to the ATP-dependent AMP-binding enzyme family.

The protein localises to the cell inner membrane. It carries out the reaction 2,3-dihydroxybenzoate + holo-[ACP] + ATP = 2,3-dihydroxybenzoyl-[ACP] + AMP + diphosphate. Its pathway is siderophore biosynthesis; vibriobactin biosynthesis. Functionally, activation of the carboxylate group of 2,3-dihydroxy-benzoate (DHB), via ATP-dependent PPi exchange reactions, to the acyladenylate, preparing that molecule for the final stages of vibriobactin synthesis. This Vibrio cholerae serotype O1 (strain ATCC 39315 / El Tor Inaba N16961) protein is Vibriobactin-specific 2,3-dihydroxybenzoate-AMP ligase (vibE).